Reading from the N-terminus, the 173-residue chain is Protein TraS (173 aa).

It localises to the cell inner membrane. Its function is as follows. Involved in surface exclusion. The chain is Protein TraS (traS) from Escherichia coli (strain K12).